We begin with the raw amino-acid sequence, 296 residues long: Probable endonuclease 4 (296 aa).

Zn(2+) contacts are provided by histidine 68, histidine 109, glutamate 144, aspartate 178, histidine 181, histidine 213, aspartate 226, histidine 228, and glutamate 258.

This sequence belongs to the AP endonuclease 2 family. Zn(2+) serves as cofactor.

The catalysed reaction is Endonucleolytic cleavage to 5'-phosphooligonucleotide end-products.. In terms of biological role, endonuclease IV plays a role in DNA repair. It cleaves phosphodiester bonds at apurinic or apyrimidinic (AP) sites, generating a 3'-hydroxyl group and a 5'-terminal sugar phosphate. The sequence is that of Probable endonuclease 4 from Staphylococcus aureus (strain Mu3 / ATCC 700698).